A 209-amino-acid chain; its full sequence is Eukaryotic translation initiation factor 4E (209 aa).

Residues 51–52 (WH), 97–98 (WE), and 153–158 (RKQAYR) each bind mRNA.

It belongs to the eukaryotic initiation factor 4E family. As to quaternary structure, eIF4F is a multi-subunit complex, the composition of which varies with external and internal environmental conditions. It is composed of at least eIF4A, eIF4E and eIF4G. eIF4E is also known to interact with other partners.

In terms of biological role, recognizes and binds the 7-methylguanosine-containing mRNA cap during an early step in the initiation of protein synthesis and facilitates ribosome binding by inducing the unwinding of the mRNAs secondary structures. This Candida albicans (strain SC5314 / ATCC MYA-2876) (Yeast) protein is Eukaryotic translation initiation factor 4E (TIF45).